The primary structure comprises 176 residues: Large ribosomal subunit protein uL6 (176 aa).

The protein belongs to the universal ribosomal protein uL6 family. Part of the 50S ribosomal subunit.

Its function is as follows. This protein binds to the 23S rRNA, and is important in its secondary structure. It is located near the subunit interface in the base of the L7/L12 stalk, and near the tRNA binding site of the peptidyltransferase center. The chain is Large ribosomal subunit protein uL6 from Burkholderia lata (strain ATCC 17760 / DSM 23089 / LMG 22485 / NCIMB 9086 / R18194 / 383).